A 473-amino-acid polypeptide reads, in one-letter code: Double-stranded RNA-binding protein 7 (473 aa).

Residues 1-10 are compositionally biased toward pro residues; sequence MDMPPTPLPP. The tract at residues 1 to 22 is disordered; that stretch reads MDMPPTPLPPETANTSPAPNGA. DRBM domains are found at residues 33 to 102 and 118 to 185; these read VFKS…EIVK and LCKN…AIQG. 3 stretches are compositionally biased toward basic and acidic residues: residues 286-307, 317-327, and 416-427; these read KRVEAEPPRDIEMVQPDKENQH, DEARVEQEPSR, and VDARVVKEESPR. Disordered stretches follow at residues 286 to 329 and 393 to 473; these read KRVE…SRDI and QLNE…MSEE. Positions 433 to 450 are enriched in polar residues; the sequence is EATNMKETPKNSAVCNSP.

Binds double-stranded RNA. In Oryza sativa subsp. japonica (Rice), this protein is Double-stranded RNA-binding protein 7 (DRB7).